Here is a 366-residue protein sequence, read N- to C-terminus: Transcription initiation factor IIA subunit 1 (366 aa).

Disordered regions lie at residues 56 to 82, 133 to 162, and 257 to 317; these read LSPD…AANA, EVNS…SSGQ, and QLDG…DSAE. Low complexity predominate over residues 146–162; that stretch reads SAASMMQKQQQAASSGQ. Over residues 264–317 the composition is skewed to acidic residues; that stretch reads SSDEDESEESDDNIDNDDDDDLDKDDDEDAEHEDAAEEEPLNSEDDVTDEDSAE. Phosphoserine; by TAF1 is present on residues Ser-265 and Ser-306.

The protein belongs to the TFIIA subunit 1 family. Belongs to the TFIID complex which is composed of TATA binding protein (Tbp) and a number of TBP-associated factors (Tafs). TFIIA is a heterodimer of a unprocessed large subunit 1 and a small subunit gamma. It was originally believed to be a heterotrimer of an alpha (p30), a beta (p20) and a gamma subunit (p14). Interacts with Tbp. Taf4 interacts with TFIIA-L when TFIIA-L is in complex with Tbp. The precursor form (48 kDa) is cleaved to give rise to the alpha (30 kDa) and beta (20 kDa) subunits.

It localises to the nucleus. Functionally, TFIIA is a component of the transcription machinery of RNA polymerase II and plays an important role in transcriptional activation. TFIIA in a complex with TBP mediates transcriptional activity. The protein is Transcription initiation factor IIA subunit 1 (TfIIA-L) of Drosophila melanogaster (Fruit fly).